A 360-amino-acid chain; its full sequence is MALPSSSWSEFLPELLNTVFHNLNDARDILNCATVCSSWKDSSSAVYYSRTFSPFLFISHLSSNEEIRFSDQFRVLSPGKLGFSGNQQAWVCGSTLGFLLTKPVTKSVTSLPPLISFEDVQRLLQSQAIIPDSEALKNFIKKAVSSTSLLDDEWVVLVIYNTDRKLAFCRRGDKQWTDLESVASSVDDIVFCNGVFFAIDRLGEIYHCELSANNPKATPLCSTSPFRYDSCKKYLAESDYDELWVVLKKLELNDDCDFETSFEIYEFNRETNEWTKVMSLRGKALFLSPQGRCIAVLAGERGFFKDNSVYFIDGDDPSVGGSGPQNLSVFEWESKQIMKIYQPRSWNCQMFWVTPTDVPQ.

In terms of domain architecture, F-box spans 6–54; it reads SSWSEFLPELLNTVFHNLNDARDILNCATVCSSWKDSSSAVYYSRTFSP.

This chain is Putative F-box protein At5g55150, found in Arabidopsis thaliana (Mouse-ear cress).